Here is a 553-residue protein sequence, read N- to C-terminus: Hydroxylamine reductase (553 aa).

The [4Fe-4S] cluster site is built by cysteine 3, cysteine 6, cysteine 15, and cysteine 21. Histidine 244, glutamate 268, cysteine 312, cysteine 406, cysteine 434, cysteine 459, glutamate 494, and lysine 496 together coordinate hybrid [4Fe-2O-2S] cluster. Cysteine 406 is subject to Cysteine persulfide.

The protein belongs to the HCP family. As to quaternary structure, monomer. [4Fe-4S] cluster is required as a cofactor. It depends on hybrid [4Fe-2O-2S] cluster as a cofactor.

The protein resides in the cytoplasm. The catalysed reaction is A + NH4(+) + H2O = hydroxylamine + AH2 + H(+). Functionally, catalyzes the reduction of hydroxylamine to form NH(3) and H(2)O. This is Hydroxylamine reductase from Nitratidesulfovibrio vulgaris (strain ATCC 29579 / DSM 644 / CCUG 34227 / NCIMB 8303 / VKM B-1760 / Hildenborough) (Desulfovibrio vulgaris).